A 105-amino-acid polypeptide reads, in one-letter code: uncharacterized protein (105 aa).

A run of 2 helical transmembrane segments spans residues 56 to 76 (ALIWSRKAIMRLIGLVVVLII) and 85 to 105 (INLNPYLVWVITTLILMGVFY).

The protein resides in the membrane. This is an uncharacterized protein from Aedes vexans (Inland floodwater mosquito).